The primary structure comprises 477 residues: Aspartyl/glutamyl-tRNA(Asn/Gln) amidotransferase subunit B (477 aa).

It belongs to the GatB/GatE family. GatB subfamily. As to quaternary structure, heterotrimer of A, B and C subunits.

The catalysed reaction is L-glutamyl-tRNA(Gln) + L-glutamine + ATP + H2O = L-glutaminyl-tRNA(Gln) + L-glutamate + ADP + phosphate + H(+). It carries out the reaction L-aspartyl-tRNA(Asn) + L-glutamine + ATP + H2O = L-asparaginyl-tRNA(Asn) + L-glutamate + ADP + phosphate + 2 H(+). Functionally, allows the formation of correctly charged Asn-tRNA(Asn) or Gln-tRNA(Gln) through the transamidation of misacylated Asp-tRNA(Asn) or Glu-tRNA(Gln) in organisms which lack either or both of asparaginyl-tRNA or glutaminyl-tRNA synthetases. The reaction takes place in the presence of glutamine and ATP through an activated phospho-Asp-tRNA(Asn) or phospho-Glu-tRNA(Gln). The sequence is that of Aspartyl/glutamyl-tRNA(Asn/Gln) amidotransferase subunit B from Coxiella burnetii (strain CbuG_Q212) (Coxiella burnetii (strain Q212)).